Here is a 124-residue protein sequence, read N- to C-terminus: Small ribosomal subunit protein uS12 (124 aa).

At D89 the chain carries 3-methylthioaspartic acid. The tract at residues 104–124 (ALGVEDRKRGRSKYGAKRPKA) is disordered. Positions 112 to 124 (RGRSKYGAKRPKA) are enriched in basic residues.

The protein belongs to the universal ribosomal protein uS12 family. As to quaternary structure, part of the 30S ribosomal subunit. Contacts proteins S8 and S17. May interact with IF1 in the 30S initiation complex.

Functionally, with S4 and S5 plays an important role in translational accuracy. In terms of biological role, interacts with and stabilizes bases of the 16S rRNA that are involved in tRNA selection in the A site and with the mRNA backbone. Located at the interface of the 30S and 50S subunits, it traverses the body of the 30S subunit contacting proteins on the other side and probably holding the rRNA structure together. The combined cluster of proteins S8, S12 and S17 appears to hold together the shoulder and platform of the 30S subunit. This is Small ribosomal subunit protein uS12 from Treponema denticola (strain ATCC 35405 / DSM 14222 / CIP 103919 / JCM 8153 / KCTC 15104).